The sequence spans 339 residues: MSTHLRKLPGLLLCLLLALPAWYLGRLFPIIGAPVFAILLGMLLALFYHHRDKTKEGISFTSKYILQTAVVLLGFGLNLTQVMAVGMQSLPIIISTIATALLVAYGLQKWLRLDVNTATLVGIGSSICGGSAIAATAPVIKAKDDEVAKAISVIFLFNMLAALLFPSLGQLLGLSNEGFAIFAGTAVNDTSSVTATATAWDALHHSNTLDGATIVKLTRTLAILPITLGLSLYRAKKEHDIVTEENFSLRKSFPRFILFFLLASLITTLMTSLGVSADSFHSLKTLSKFFIVMAMAAIGLNTNLVKLIKTGGQAILLGSICWVAITLVSLAMQLSLGIW.

The next 9 helical transmembrane spans lie at 7–24 (KLPG…AWYL), 28–50 (FPII…FYHH), 57–79 (GISF…GLNL), 84–106 (AVGM…VAYG), 118–140 (ATLV…APVI), 150–172 (AISV…GQLL), 256–275 (FILF…SLGV), 290–307 (FIVM…LVKL), and 314–336 (AILL…QLSL).

The protein belongs to the UPF0324 family.

It is found in the cell membrane. In Streptococcus pyogenes serotype M3 (strain ATCC BAA-595 / MGAS315), this protein is UPF0324 membrane protein SpyM3_0740.